Reading from the N-terminus, the 284-residue chain is 3-methyl-2-oxobutanoate hydroxymethyltransferase (284 aa).

The Mg(2+) site is built by D44 and D83. 3-methyl-2-oxobutanoate contacts are provided by residues 44–45, D83, and K112; that span reads DS. Residue E114 participates in Mg(2+) binding. Residue E181 is the Proton acceptor of the active site.

This sequence belongs to the PanB family. In terms of assembly, homodecamer; pentamer of dimers. Mg(2+) is required as a cofactor.

It is found in the cytoplasm. It catalyses the reaction 3-methyl-2-oxobutanoate + (6R)-5,10-methylene-5,6,7,8-tetrahydrofolate + H2O = 2-dehydropantoate + (6S)-5,6,7,8-tetrahydrofolate. The protein operates within cofactor biosynthesis; coenzyme A biosynthesis. Its activity is regulated as follows. Neither activated nor inhibited by coenzyme A. In terms of biological role, catalyzes the reversible reaction in which hydroxymethyl group from 5,10-methylenetetrahydrofolate is transferred onto alpha-ketoisovalerate to form ketopantoate. The polypeptide is 3-methyl-2-oxobutanoate hydroxymethyltransferase (Thermococcus kodakarensis (strain ATCC BAA-918 / JCM 12380 / KOD1) (Pyrococcus kodakaraensis (strain KOD1))).